A 107-amino-acid chain; its full sequence is Prostate collagen triple helix protein (107 aa).

The interval 47–107 is disordered; that stretch reads PLIPRTPGSP…PTSPLFPFCP (61 aa). The span at 81–100 shows a compositional bias: low complexity; it reads VGPKGPMLPLGPSGPVGPTS.

As to expression, expressed in prostate and testis. Weakly or not expressed in other tissues. Overexpressed in prostate cancers.

It is found in the cytoplasm. Functionally, may be involved in growth and survival of prostate cancer cells through the TAF-Ibeta pathway. The protein is Prostate collagen triple helix protein (PCOTH) of Homo sapiens (Human).